The primary structure comprises 198 residues: ATP-dependent Clp protease proteolytic subunit 2 (198 aa).

Serine 94 acts as the Nucleophile in catalysis. The active site involves histidine 119.

It belongs to the peptidase S14 family. Fourteen ClpP subunits assemble into 2 heptameric rings which stack back to back to give a disk-like structure with a central cavity, resembling the structure of eukaryotic proteasomes.

Its subcellular location is the cytoplasm. It catalyses the reaction Hydrolysis of proteins to small peptides in the presence of ATP and magnesium. alpha-casein is the usual test substrate. In the absence of ATP, only oligopeptides shorter than five residues are hydrolyzed (such as succinyl-Leu-Tyr-|-NHMec, and Leu-Tyr-Leu-|-Tyr-Trp, in which cleavage of the -Tyr-|-Leu- and -Tyr-|-Trp bonds also occurs).. Cleaves peptides in various proteins in a process that requires ATP hydrolysis. Has a chymotrypsin-like activity. Plays a major role in the degradation of misfolded proteins. The sequence is that of ATP-dependent Clp protease proteolytic subunit 2 from Borreliella burgdorferi (strain ATCC 35210 / DSM 4680 / CIP 102532 / B31) (Borrelia burgdorferi).